Here is a 289-residue protein sequence, read N- to C-terminus: Diaminopimelate epimerase (289 aa).

Asn11 and Asn78 together coordinate substrate. Catalysis depends on Cys87, which acts as the Proton donor. Substrate-binding positions include 88-89 (GN), Asn163, Asn199, and 217-218 (ER). The active-site Proton acceptor is Cys226. 227–228 (GT) contacts substrate.

It belongs to the diaminopimelate epimerase family. Homodimer.

It is found in the cytoplasm. The catalysed reaction is (2S,6S)-2,6-diaminopimelate = meso-2,6-diaminopimelate. The protein operates within amino-acid biosynthesis; L-lysine biosynthesis via DAP pathway; DL-2,6-diaminopimelate from LL-2,6-diaminopimelate: step 1/1. Functionally, catalyzes the stereoinversion of LL-2,6-diaminopimelate (L,L-DAP) to meso-diaminopimelate (meso-DAP), a precursor of L-lysine and an essential component of the bacterial peptidoglycan. The chain is Diaminopimelate epimerase from Rhodococcus opacus (strain B4).